We begin with the raw amino-acid sequence, 201 residues long: Iron-sulfur flavoprotein AF_1896 (201 aa).

The [4Fe-4S] cluster site is built by Cys-46, Cys-49, Cys-52, and Cys-57.

It belongs to the SsuE family. Isf subfamily. As to quaternary structure, homodimer. FMN is required as a cofactor. Requires [4Fe-4S] cluster as cofactor.

In terms of biological role, redox-active protein probably involved in electron transport. The chain is Iron-sulfur flavoprotein AF_1896 from Archaeoglobus fulgidus (strain ATCC 49558 / DSM 4304 / JCM 9628 / NBRC 100126 / VC-16).